Consider the following 177-residue polypeptide: ATP synthase subunit delta (177 aa).

Belongs to the ATPase delta chain family. F-type ATPases have 2 components, F(1) - the catalytic core - and F(0) - the membrane proton channel. F(1) has five subunits: alpha(3), beta(3), gamma(1), delta(1), epsilon(1). F(0) has three main subunits: a(1), b(2) and c(10-14). The alpha and beta chains form an alternating ring which encloses part of the gamma chain. F(1) is attached to F(0) by a central stalk formed by the gamma and epsilon chains, while a peripheral stalk is formed by the delta and b chains.

It localises to the cell inner membrane. Functionally, f(1)F(0) ATP synthase produces ATP from ADP in the presence of a proton or sodium gradient. F-type ATPases consist of two structural domains, F(1) containing the extramembraneous catalytic core and F(0) containing the membrane proton channel, linked together by a central stalk and a peripheral stalk. During catalysis, ATP synthesis in the catalytic domain of F(1) is coupled via a rotary mechanism of the central stalk subunits to proton translocation. In terms of biological role, this protein is part of the stalk that links CF(0) to CF(1). It either transmits conformational changes from CF(0) to CF(1) or is implicated in proton conduction. This is ATP synthase subunit delta from Aliivibrio salmonicida (strain LFI1238) (Vibrio salmonicida (strain LFI1238)).